The chain runs to 109 residues: Serine protease inhibitor (109 aa).

The N-terminal stretch at M1–A28 is a signal peptide. 5 cysteine pairs are disulfide-bonded: C43–C83, C52–C79, C58–C73, C62–C104, and C85–C98. The TIL domain maps to C43–C104.

Belongs to the serine protease inhibitor-like (TIL domain-containing) family. As to expression, ubiquitously expressed (at protein level), including in venom glands. Found more precisely in the epidermis, fat body, gut, muscle, and venom of worker bees.

The protein localises to the secreted. Dual role peptide that functions as a broad-spectrum antimicrobial peptide and antifibrinolytic toxin. Inhibits trypsin (IC(50)=375 nM), plasmin (IC(50)=2140 nM), and microbial serine proteases (subtilisin A (IC(50)=294 nM) and proteinase K (IC(50)=459 nM)). Exhibits antifibrinolytic activity by binding and inhibiting plasmin. Does not inhibit chymotrypsin, elastase or thrombin. Binds to microbial cell wall carbohydrates (LPS, mannan and N-acetyl-D-glucosamine) and shows antimicrobial activity (MIC=4.1 uM against B.thuringiensis, MIC=4.95 uM against E.coli, MIC=9.6 uM against the fungus B.bassiana). Does not show hemolytic activity. The polypeptide is Serine protease inhibitor (Bombus ignitus (Bumblebee)).